The sequence spans 379 residues: Alcohol dehydrogenase 1 (379 aa).

The Zn(2+) site is built by Cys47, Thr49, His69, Cys99, Cys102, Cys105, Cys113, and Cys177. Thr49 and His69 together coordinate an alcohol. Thr49 serves as a coordination point for NAD(+). Residues 202–207 (GLGAVG), Asp226, Arg231, Thr272, Val295, 295–297 (VGV), Phe322, and Arg372 each bind NAD(+).

This sequence belongs to the zinc-containing alcohol dehydrogenase family. As to quaternary structure, homodimer. Zn(2+) serves as cofactor.

It localises to the cytoplasm. The catalysed reaction is a primary alcohol + NAD(+) = an aldehyde + NADH + H(+). It carries out the reaction a secondary alcohol + NAD(+) = a ketone + NADH + H(+). This Cenchrus americanus (Pearl millet) protein is Alcohol dehydrogenase 1 (ADH1).